The primary structure comprises 524 residues: L-lactate permease (524 aa).

Transmembrane regions (helical) follow at residues 12–34, 38–60, 67–89, 127–149, 156–178, 193–215, 224–246, 250–267, 297–319, 339–361, 374–396, 411–433, and 505–522; these read LAVSAFVAAIPILLLLLCLTVFK, IQAALLTLLVTFFIAGLVFHLPF, IVQGVVQGLWPIGYIIVMAVWLY, LEGAAGFGVPIAICAVLLVSLGF, MLCLIANGASGAFGAIGIPVGII, SMMTALTLPMINFTIPFLLIWLM, ILPAILVTSSVYTVSQALITIFI, LADIIPSLLTMGLLALFL, WSPFYLLTMFVFLWSLPAFKGLL, IEVGVDFIGATGTAILLAAVTTV, SLLKKVIVDFSIPIMMICAIIGI, EAVATTGAFFPFLSPILGWIGVF, and YSFGLLVFVSVWTYILSL.

This sequence belongs to the lactate permease family.

The protein localises to the cell membrane. In terms of biological role, may play a role in L-lactate transport. This is L-lactate permease (lctP) from Halalkalibacterium halodurans (strain ATCC BAA-125 / DSM 18197 / FERM 7344 / JCM 9153 / C-125) (Bacillus halodurans).